A 429-amino-acid polypeptide reads, in one-letter code: UDP-N-acetylglucosamine 1-carboxyvinyltransferase (429 aa).

22-23 (KN) serves as a coordination point for phosphoenolpyruvate. Arginine 102 is a UDP-N-acetyl-alpha-D-glucosamine binding site. The active-site Proton donor is the cysteine 126. 2-(S-cysteinyl)pyruvic acid O-phosphothioketal is present on cysteine 126. Residues 131 to 135 (RPVDL), aspartate 316, and isoleucine 338 each bind UDP-N-acetyl-alpha-D-glucosamine.

This sequence belongs to the EPSP synthase family. MurA subfamily.

The protein resides in the cytoplasm. It catalyses the reaction phosphoenolpyruvate + UDP-N-acetyl-alpha-D-glucosamine = UDP-N-acetyl-3-O-(1-carboxyvinyl)-alpha-D-glucosamine + phosphate. It functions in the pathway cell wall biogenesis; peptidoglycan biosynthesis. In terms of biological role, cell wall formation. Adds enolpyruvyl to UDP-N-acetylglucosamine. The chain is UDP-N-acetylglucosamine 1-carboxyvinyltransferase from Methylobacterium nodulans (strain LMG 21967 / CNCM I-2342 / ORS 2060).